The chain runs to 541 residues: Probable malate:quinone oxidoreductase (541 aa).

Positions 520–541 are disordered; sequence AKPAAGAAQQAKPAKATADIAL.

This sequence belongs to the MQO family. It depends on FAD as a cofactor.

It carries out the reaction (S)-malate + a quinone = a quinol + oxaloacetate. It functions in the pathway carbohydrate metabolism; tricarboxylic acid cycle; oxaloacetate from (S)-malate (quinone route): step 1/1. This chain is Probable malate:quinone oxidoreductase, found in Ralstonia nicotianae (strain ATCC BAA-1114 / GMI1000) (Ralstonia solanacearum).